The chain runs to 320 residues: MSAPEGLGDAHGDADRGDLSGDLRSVLVTSVLNLEPLDEDLYRGRHYWVPTSQRLFGGQIMGQALVAAAKSVSEDVHVHSLHCYFVRAGDPKVPVLYHVERIRTGASFSVRAVKAVQHGKAIFICQASFQQMQPSPLQHQFSMPSVPPPEDLLDHEALIDQYLRDPNLHKKYRVGLNRVAAQEVPIEIKVVNPPTLTQLQALEPKQMFWVRARGYIGEGDIKMHCCVAAYISDYAFLGTALLPHQSKYKVNFMASLDHSMWFHAPFRADHWMLYECESPWAGGSRGLVHGRLWRRDGVLAVTCAQEGVIRLKPQVSESKL.

Active-site charge relay system residues include aspartate 233, serine 255, and glutamine 305. Residues 318–320 (SKL) carry the Microbody targeting signal motif.

This sequence belongs to the C/M/P thioester hydrolase family. Homodimer. Ubiquitous.

It localises to the peroxisome matrix. It catalyses the reaction choloyl-CoA + H2O = cholate + CoA + H(+). The catalysed reaction is chenodeoxycholoyl-CoA + H2O = chenodeoxycholate + CoA + H(+). It carries out the reaction acetyl-CoA + H2O = acetate + CoA + H(+). The enzyme catalyses malonyl-CoA + H2O = malonate + CoA + H(+). It catalyses the reaction acetoacetyl-CoA + H2O = acetoacetate + CoA + H(+). The catalysed reaction is propanoyl-CoA + H2O = propanoate + CoA + H(+). It carries out the reaction butanoyl-CoA + H2O = butanoate + CoA + H(+). The enzyme catalyses succinyl-CoA + H2O = succinate + CoA + H(+). It catalyses the reaction glutaryl-CoA + H2O = glutarate + CoA + H(+). The catalysed reaction is hexanoyl-CoA + H2O = hexanoate + CoA + H(+). It carries out the reaction hexanedioyl-CoA + H2O = hexanedioate + CoA + H(+). The enzyme catalyses octanoyl-CoA + H2O = octanoate + CoA + H(+). It catalyses the reaction octanedioyl-CoA + H2O = octanedioate + CoA + H(+). The catalysed reaction is decanoyl-CoA + H2O = decanoate + CoA + H(+). It carries out the reaction decanedioyl-CoA + H2O = decanedioate + CoA + H(+). The enzyme catalyses dodecanoyl-CoA + H2O = dodecanoate + CoA + H(+). It catalyses the reaction dodecanedioyl-CoA + H2O = dodecanedioate + CoA + H(+). The catalysed reaction is tetradecanoyl-CoA + H2O = tetradecanoate + CoA + H(+). It carries out the reaction (9Z)-tetradecenoyl-CoA + H2O = (9Z)-tetradecenoate + CoA + H(+). The enzyme catalyses hexadecanoyl-CoA + H2O = hexadecanoate + CoA + H(+). It catalyses the reaction (9Z)-hexadecenoyl-CoA + H2O = (9Z)-hexadecenoate + CoA + H(+). The catalysed reaction is octadecanoyl-CoA + H2O = octadecanoate + CoA + H(+). It carries out the reaction (9Z)-octadecenoyl-CoA + H2O = (9Z)-octadecenoate + CoA + H(+). The enzyme catalyses (9Z,12Z)-octadecadienoyl-CoA + H2O = (9Z,12Z)-octadecadienoate + CoA + H(+). It catalyses the reaction eicosanoyl-CoA + H2O = eicosanoate + CoA + H(+). The catalysed reaction is (5Z,8Z,11Z,14Z)-eicosatetraenoyl-CoA + H2O = (5Z,8Z,11Z,14Z)-eicosatetraenoate + CoA + H(+). It carries out the reaction 4,8-dimethylnonanoyl-CoA + H2O = 4,8-dimethylnonanoate + CoA + H(+). The enzyme catalyses 2,6-dimethylheptanoyl-CoA + H2O = 2,6-dimethylheptanoate + CoA + H(+). It catalyses the reaction (3S)-3-hydroxy-3-methylglutaryl-CoA + H2O = 3-hydroxy-3-methylglutarate + CoA + H(+). The catalysed reaction is 3alpha,7alpha,12alpha-trihydroxy-5beta-cholestan-26-oyl-CoA + H2O = 3alpha,7alpha,12alpha-trihydroxy-5beta-cholestan-26-oate + CoA + H(+). It carries out the reaction 2-methyloctadecanoyl-CoA + H2O = 2-methyloctadecanoate + CoA + H(+). The enzyme catalyses prostaglandin F2alpha-CoA + H2O = prostaglandin F2alpha + CoA + H(+). The protein operates within lipid metabolism; fatty acid metabolism. With respect to regulation, inhibited by CoASH (IC(50)=10-15 uM). Also inhibited by cysteine-reactive agents. Functionally, catalyzes the hydrolysis of acyl-CoAs into free fatty acids and coenzyme A (CoASH), regulating their respective intracellular levels. Displays no strong substrate specificity with respect to the carboxylic acid moiety of Acyl-CoAs. Hydrolyzes medium length (C2 to C20) straight-chain, saturated and unsaturated acyl-CoAS but is inactive towards substrates with longer aliphatic chains. Moreover, it catalyzes the hydrolysis of CoA esters of bile acids, such as choloyl-CoA and chenodeoxycholoyl-CoA and competes with bile acid CoA:amino acid N-acyltransferase (BAAT). Is also able to hydrolyze CoA esters of dicarboxylic acids. It is involved in the metabolic regulation of peroxisome proliferation. In Mus musculus (Mouse), this protein is Acyl-coenzyme A thioesterase 8 (Acot8).